Reading from the N-terminus, the 197-residue chain is Elongation factor Ts (197 aa).

The interval 81–84 (TDFV) is involved in Mg(2+) ion dislocation from EF-Tu.

The protein belongs to the EF-Ts family.

The protein resides in the cytoplasm. In terms of biological role, associates with the EF-Tu.GDP complex and induces the exchange of GDP to GTP. It remains bound to the aminoacyl-tRNA.EF-Tu.GTP complex up to the GTP hydrolysis stage on the ribosome. The protein is Elongation factor Ts of Persephonella marina (strain DSM 14350 / EX-H1).